The primary structure comprises 283 residues: 4-hydroxy-3-methylbut-2-enyl diphosphate reductase (283 aa).

Residue Cys-12 coordinates [4Fe-4S] cluster. Residues His-40 and His-73 each contribute to the (2E)-4-hydroxy-3-methylbut-2-enyl diphosphate site. 2 residues coordinate dimethylallyl diphosphate: His-40 and His-73. Isopentenyl diphosphate is bound by residues His-40 and His-73. Residue Cys-95 coordinates [4Fe-4S] cluster. Residue His-123 participates in (2E)-4-hydroxy-3-methylbut-2-enyl diphosphate binding. His-123 contributes to the dimethylallyl diphosphate binding site. Isopentenyl diphosphate is bound at residue His-123. Glu-125 functions as the Proton donor in the catalytic mechanism. Thr-161 is a binding site for (2E)-4-hydroxy-3-methylbut-2-enyl diphosphate. Cys-189 lines the [4Fe-4S] cluster pocket. 3 residues coordinate (2E)-4-hydroxy-3-methylbut-2-enyl diphosphate: Ser-217, Asn-219, and Ser-261. Residues Ser-217, Asn-219, and Ser-261 each coordinate dimethylallyl diphosphate. Positions 217, 219, and 261 each coordinate isopentenyl diphosphate.

Belongs to the IspH family. [4Fe-4S] cluster is required as a cofactor.

It carries out the reaction isopentenyl diphosphate + 2 oxidized [2Fe-2S]-[ferredoxin] + H2O = (2E)-4-hydroxy-3-methylbut-2-enyl diphosphate + 2 reduced [2Fe-2S]-[ferredoxin] + 2 H(+). The catalysed reaction is dimethylallyl diphosphate + 2 oxidized [2Fe-2S]-[ferredoxin] + H2O = (2E)-4-hydroxy-3-methylbut-2-enyl diphosphate + 2 reduced [2Fe-2S]-[ferredoxin] + 2 H(+). It participates in isoprenoid biosynthesis; dimethylallyl diphosphate biosynthesis; dimethylallyl diphosphate from (2E)-4-hydroxy-3-methylbutenyl diphosphate: step 1/1. It functions in the pathway isoprenoid biosynthesis; isopentenyl diphosphate biosynthesis via DXP pathway; isopentenyl diphosphate from 1-deoxy-D-xylulose 5-phosphate: step 6/6. In terms of biological role, catalyzes the conversion of 1-hydroxy-2-methyl-2-(E)-butenyl 4-diphosphate (HMBPP) into a mixture of isopentenyl diphosphate (IPP) and dimethylallyl diphosphate (DMAPP). Acts in the terminal step of the DOXP/MEP pathway for isoprenoid precursor biosynthesis. The protein is 4-hydroxy-3-methylbut-2-enyl diphosphate reductase of Geobacter sp. (strain M21).